A 392-amino-acid polypeptide reads, in one-letter code: INCREASED PETAL GROWTH ANISOTROPY 1-like protein 1 (392 aa).

Residues 11–52 adopt a coiled-coil conformation; it reads LLRLVKELQAYLVRNDKLEKENHELRQEVARLRAQVSNLKSH. 2 stretches are compositionally biased toward polar residues: residues 65–76 and 100–109; these read QSSYDGSNTDGS and PTIQGQSTAT. A disordered region spans residues 65 to 128; the sequence is QSSYDGSNTD…SKRTLGKRSV (64 aa). A coiled-coil region spans residues 269–299; the sequence is KDSLTQALQRIQSLQDRLEESVNNTEKMRDS.

It belongs to the IPGA1 family.

The protein localises to the cytoplasm. The protein resides in the cytoskeleton. In terms of biological role, microtubule-associated protein probably involved in the regulation of microtubule organization. This Arabidopsis thaliana (Mouse-ear cress) protein is INCREASED PETAL GROWTH ANISOTROPY 1-like protein 1.